The sequence spans 349 residues: Small ribosomal subunit biogenesis GTPase RsgA (349 aa).

Over residues 1-11 (MSKKKLSKGQQ) the composition is skewed to basic residues. Positions 1 to 35 (MSKKKLSKGQQRRVSANHQRRLKHADSKVEWDDSQ) are disordered. The region spanning 111 to 272 (YDGLKPIAAN…VIDSPGVREF (162 aa)) is the CP-type G domain. GTP is bound by residues 158–161 (NKID) and 212–220 (GQSGVGKSS). Residues C296, C301, H303, and C309 each coordinate Zn(2+).

It belongs to the TRAFAC class YlqF/YawG GTPase family. RsgA subfamily. In terms of assembly, monomer. Associates with 30S ribosomal subunit, binds 16S rRNA. Zn(2+) serves as cofactor.

The protein resides in the cytoplasm. Its function is as follows. One of several proteins that assist in the late maturation steps of the functional core of the 30S ribosomal subunit. Helps release RbfA from mature subunits. May play a role in the assembly of ribosomal proteins into the subunit. Circularly permuted GTPase that catalyzes slow GTP hydrolysis, GTPase activity is stimulated by the 30S ribosomal subunit. This is Small ribosomal subunit biogenesis GTPase RsgA from Dickeya dadantii (strain 3937) (Erwinia chrysanthemi (strain 3937)).